A 257-amino-acid polypeptide reads, in one-letter code: Acetylglutamate kinase (257 aa).

Substrate-binding positions include 43–44 (GG), Arg-65, and Asn-157.

Belongs to the acetylglutamate kinase family. ArgB subfamily.

It is found in the cytoplasm. It carries out the reaction N-acetyl-L-glutamate + ATP = N-acetyl-L-glutamyl 5-phosphate + ADP. It functions in the pathway amino-acid biosynthesis; L-arginine biosynthesis; N(2)-acetyl-L-ornithine from L-glutamate: step 2/4. In terms of biological role, catalyzes the ATP-dependent phosphorylation of N-acetyl-L-glutamate. In Actinobacillus succinogenes (strain ATCC 55618 / DSM 22257 / CCUG 43843 / 130Z), this protein is Acetylglutamate kinase.